The sequence spans 1029 residues: Multidrug resistance protein MdtC (1029 aa).

11 helical membrane passes run I15 to A35, E333 to L353, L360 to C380, L387 to L407, V431 to L451, V469 to L489, L528 to P548, V853 to S873, A897 to V917, P953 to G973, and I984 to V1004.

The protein belongs to the resistance-nodulation-cell division (RND) (TC 2.A.6) family. MdtC subfamily. Part of a tripartite efflux system composed of MdtA, MdtB and MdtC. MdtC forms a heteromultimer with MdtB.

It localises to the cell inner membrane. This Cronobacter sakazakii (strain ATCC BAA-894) (Enterobacter sakazakii) protein is Multidrug resistance protein MdtC.